A 108-amino-acid polypeptide reads, in one-letter code: Beta-defensin 126 (108 aa).

The signal sequence occupies residues 1–20 (MKSLLFTLAVFMLLAQLVSG). The segment at 21 to 63 (NWYVKKCLNDVGICKKKCKPGEMHIKNGWATCGKQRDCCVPAD) is in vitro binds to LPS, mediates antimicrobial activity and inhibits LPS-mediated inflammation. 3 disulfides stabilise this stretch: Cys-27–Cys-58, Cys-34–Cys-52, and Cys-38–Cys-59.

The protein belongs to the beta-defensin family. Homodimer or homooligomer; disulfide-linked. In terms of processing, O-glycosylated; glycans contain alpha(2,3)-linked sialic acids.

The protein resides in the secreted. Highly glycosylated atypical beta-defensin involved in several aspects of sperm function. Facilitates sperm transport in the female reproductive tract and contributes to sperm protection against immunodetection; both functions are probably implicating the negative surface charge provided by its O-linked oligosaccharides in the sperm glycocalyx. Involved in binding of sperm to oviductal epithelial cells to form a sperm reservoir until ovulation. Release from the sperm surface during capacitation and ovaluation by an elevation of oviductal fluid pH is unmasking other surface components and allows sperm to penetrate the cumulus matrix and bind to the zona pellucida of the oocyte. In vitro has antimicrobial activity and may inhibit LPS-mediated inflammation. The protein is Beta-defensin 126 (DEFB126) of Pan troglodytes (Chimpanzee).